A 184-amino-acid polypeptide reads, in one-letter code: ATP-dependent protease subunit HslV (184 aa).

T12 is an active-site residue. Positions 166, 169, and 172 each coordinate Na(+).

Belongs to the peptidase T1B family. HslV subfamily. A double ring-shaped homohexamer of HslV is capped on each side by a ring-shaped HslU homohexamer. The assembly of the HslU/HslV complex is dependent on binding of ATP.

The protein resides in the cytoplasm. The catalysed reaction is ATP-dependent cleavage of peptide bonds with broad specificity.. Allosterically activated by HslU binding. Its function is as follows. Protease subunit of a proteasome-like degradation complex believed to be a general protein degrading machinery. The sequence is that of ATP-dependent protease subunit HslV from Brucella ovis (strain ATCC 25840 / 63/290 / NCTC 10512).